The chain runs to 361 residues: Sensor protein VanSC (361 aa).

Helical transmembrane passes span 16-36 (FVTT…IRFI) and 59-79 (WLFC…IYYM). The Histidine kinase domain maps to 144-359 (YLAHDLRTPL…IFNVRLPKPA (216 aa)). At H147 the chain carries Phosphohistidine; by autocatalysis. E252 provides a ligand contact to Mg(2+).

Autophosphorylated.

The protein resides in the membrane. The enzyme catalyses ATP + protein L-histidine = ADP + protein N-phospho-L-histidine.. This Enterococcus gallinarum protein is Sensor protein VanSC.